The chain runs to 219 residues: Octanoyltransferase (219 aa).

The BPL/LPL catalytic domain occupies 32–207; the sequence is ENSQDEIWIV…TLSQELGLDK (176 aa). Residues 71–78, 138–140, and 151–153 each bind substrate; these read RGGQVTYH, SLG, and GLA. The Acyl-thioester intermediate role is filled by C169.

Belongs to the LipB family.

The protein resides in the cytoplasm. It catalyses the reaction octanoyl-[ACP] + L-lysyl-[protein] = N(6)-octanoyl-L-lysyl-[protein] + holo-[ACP] + H(+). The protein operates within protein modification; protein lipoylation via endogenous pathway; protein N(6)-(lipoyl)lysine from octanoyl-[acyl-carrier-protein]: step 1/2. In terms of biological role, catalyzes the transfer of endogenously produced octanoic acid from octanoyl-acyl-carrier-protein onto the lipoyl domains of lipoate-dependent enzymes. Lipoyl-ACP can also act as a substrate although octanoyl-ACP is likely to be the physiological substrate. In Shewanella halifaxensis (strain HAW-EB4), this protein is Octanoyltransferase.